The chain runs to 95 residues: Small ribosomal subunit protein bS18 (95 aa).

Belongs to the bacterial ribosomal protein bS18 family. Part of the 30S ribosomal subunit. Forms a tight heterodimer with protein bS6.

Its function is as follows. Binds as a heterodimer with protein bS6 to the central domain of the 16S rRNA, where it helps stabilize the platform of the 30S subunit. The protein is Small ribosomal subunit protein bS18 of Rickettsia massiliae (strain Mtu5).